Reading from the N-terminus, the 480-residue chain is MAAWCSPRWLRVAVGTPRLPAAAGRGVQQPQGGVVATSLCRKLCVSAFGLSMGAHGPRALLTLRPGVRLTGTKSFPFVCTTSFHTSASLAKDDYYQILGVPRNASQKDIKKAYYQLAKKYHPDTNKDDPKAKEKFSQLAEAYEVLSDEVKRKQYDAYGSAGFDPGTSSSGQGYWRGGPSVDPEELFRKIFGEFSSSPFGDFQNVFDQPQEYIMELTFNQAAKGVNKEFTVNIMDTCERCDGKGNEPGTKVQHCHYCGGSGMETINTGPFVMRSTCRRCGGRGSIITNPCVVCRGAGQAKQKKRVTIPVPAGVEDGQTVRMPVGKREIFVTFRVQKSPVFRRDGADIHSDLFISIAQAILGGTAKAQGLYETINVTIPAGIQTDQKIRLTGKGIPRINSYGYGDHYIHIKIRVPKRLSSRQQNLILSYAEDETDVEGTVNGVTHTSTGGRTMDSSAGSKDRREAGEDNEGFLSKLKKIFTS.

Residue arginine 58 is modified to Omega-N-methylarginine; by CARM1. In terms of domain architecture, J spans 93-158 (DYYQILGVPR…VKRKQYDAYG (66 aa)). At lysine 134 the chain carries N6-acetyllysine. The CR-type zinc-finger motif lies at 223–301 (GVNKEFTVNI…CRGAGQAKQK (79 aa)). Residue cysteine 236 participates in Zn(2+) binding. CXXCXGXG motif repeat units lie at residues 236–243 (CERCDGKG), 253–260 (CHYCGGSG), 275–282 (CRRCGGRG), and 289–296 (CVVCRGAG). Arginine 238 is subject to Omega-N-methylarginine; by CARM1. The Zn(2+) site is built by cysteine 239, cysteine 253, cysteine 256, cysteine 275, cysteine 278, cysteine 289, and cysteine 292. Arginine 293 bears the Omega-N-methylarginine; by CARM1 mark. Serine 398 is subject to Phosphoserine. The segment at 437–468 (TVNGVTHTSTGGRTMDSSAGSKDRREAGEDNE) is disordered. The span at 439-456 (NGVTHTSTGGRTMDSSAG) shows a compositional bias: polar residues.

Interacts with JAK2, HSPA9B and IFN-gammaR2 chain. Interacts with Ras GTPase-activating protein 1 (RASA1). Isoform 2 interacts with MUSK (via the cytoplasmic domain). In terms of processing, tyrosine phosphorylated.

The protein localises to the mitochondrion matrix. The protein resides in the cytoplasm. It localises to the cytosol. It is found in the postsynaptic cell membrane. In terms of biological role, modulates apoptotic signal transduction or effector structures within the mitochondrial matrix. Affect cytochrome C release from the mitochondria and caspase 3 activation, but not caspase 8 activation. Isoform 1 increases apoptosis triggered by both TNF and the DNA-damaging agent mytomycin C; in sharp contrast, isoform 2 suppresses apoptosis. Can modulate IFN-gamma-mediated transcriptional activity. Isoform 2 may play a role in neuromuscular junction development as an effector of the MUSK signaling pathway. The protein is DnaJ homolog subfamily A member 3, mitochondrial (Dnaja3) of Mus musculus (Mouse).